The chain runs to 233 residues: DnaA regulatory inactivator Hda (233 aa).

It belongs to the DnaA family. HdA subfamily. In terms of assembly, the active form seems to be an ADP-bound monomer. Forms the RIDA complex (regulatory inactivation of DnaA) of ATP-DnaA, ADP-Hda and the DNA-loaded beta sliding clamp (dnaN).

Its function is as follows. Mediates the interaction of DNA replication initiator protein DnaA with DNA polymerase subunit beta sliding clamp (dnaN). Stimulates hydrolysis of ATP-DnaA to ADP-DnaA, rendering DnaA inactive for reinitiation, a process called regulatory inhibition of DnaA or RIDA. In Shigella boydii serotype 4 (strain Sb227), this protein is DnaA regulatory inactivator Hda.